The chain runs to 288 residues: HTH-type transcriptional regulator CzcR (288 aa).

Positions 1 to 58 constitute an HTH lysR-type domain; sequence MELRDLQIFQSVADQGSVSSAAKELNYVQSNVTARIKQLENELKTPLFYRHKRGMTLT. Residues 18-37 constitute a DNA-binding region (H-T-H motif); the sequence is VSSAAKELNYVQSNVTARIK.

Belongs to the LysR transcriptional regulatory family.

The protein is HTH-type transcriptional regulator CzcR (czcR) of Bacillus cereus (strain ATCC 10987 / NRS 248).